The sequence spans 70 residues: MVSVCRPWPAVAIALLALLVCLGALVDTCPIKPEAPGEDESLEELSHYYASLCHYLNVVTRQWWEGADMW.

The first 23 residues, 1 to 23 (MVSVCRPWPAVAIALLALLVCLG), serve as a signal peptide directing secretion.

The protein belongs to the NPY family.

The protein localises to the secreted. In Homo sapiens (Human), this protein is Putative peptide YY-3 (PYY3).